The chain runs to 161 residues: Dehydrin DHN3 (161 aa).

Over residues Met1 to Glu12 the composition is skewed to basic and acidic residues. The disordered stretch occupies residues Met1–His161. The span at His20 to Ala38 shows a compositional bias: gly residues. Low complexity-rich tracts occupy residues Asp93 to Thr107 and His115 to Thr130. A run of 2 repeats spans residues Tyr101–Thr123 and Tyr124–Gly144. Residues Tyr101 to Gly144 form a 2 X approximate tandem repeats region. The segment covering Gly131–Gly142 has biased composition (gly residues). Basic and acidic residues predominate over residues Thr143–His161.

Belongs to the plant dehydrin family.

This chain is Dehydrin DHN3 (DHN3), found in Hordeum vulgare (Barley).